A 272-amino-acid chain; its full sequence is MVSIVNIFMDYWFAEIITIGNEVLSGKTVNTNASHIGRRLTSLGFTVRRITAVMDEVDEIASAFREAIDRKPRVIVSSGGLGPTWDDKTAEGLAKALGVNLELNKTAFDMILEKYMTRKIPITEERKKMAYMPYGAIPVENNEGIAPGIYVYHNNIDILATPGVPREMENVLENFINKMLRNRSNLKYLEDFIYVENVMESSLAPYVKELVKKYDIYIKTHPKSYEMSHPILEIQIAGSGKQEEEIKVKIEKVKFELLDAIKKLNGIIRNSL.

It belongs to the CinA family.

This is Protein SSO0103 from Saccharolobus solfataricus (strain ATCC 35092 / DSM 1617 / JCM 11322 / P2) (Sulfolobus solfataricus).